A 347-amino-acid polypeptide reads, in one-letter code: Palmitoyltransferase ZDHHC11 (347 aa).

Topologically, residues 1–46 (MKEMNICGINKNWVLPEAQENNVKKFLPRPLSRVNGWSPPLHSFQA) are cytoplasmic. A helical membrane pass occupies residues 47-67 (ISWITYLAMSIVTFGIFIPFL). Topologically, residues 68 to 75 (PYSWKYAA) are lumenal. Residues 76 to 96 (NIVMGGVFIFHLIVHLIAITI) traverse the membrane as a helical segment. The Cytoplasmic portion of the chain corresponds to 97–170 (DPADTNVRLK…LNNCVGRRNY (74 aa)). The 51-residue stretch at 128-178 (QYCHLCEVTASKKAKHCSACNKCVSGFDHHCKWLNNCVGRRNYWFFFWSVA) folds into the DHHC domain. Cysteine 158 functions as the S-palmitoyl cysteine intermediate in the catalytic mechanism. The chain crosses the membrane as a helical span at residues 171 to 191 (WFFFWSVASAAVGILGVMIIL). Topologically, residues 192–234 (CYICIQYFVNPDELRTDPLYKEIISENTWLLFLSLWPVPVKTP) are lumenal. A helical transmembrane segment spans residues 235-255 (IVLSIAVMALLLAIASFVMLG). Residues 256–347 (HLLIFHLYLI…SPPKICHSED (92 aa)) lie on the Cytoplasmic side of the membrane. Residues 291–306 (ELPLQKKGDLPQEKSD) show a composition bias toward basic and acidic residues. The segment at 291–332 (ELPLQKKGDLPQEKSDNWAWPKSPPRVGSQKFPVSTLSPKSS) is disordered. The segment covering 322-331 (FPVSTLSPKS) has biased composition (polar residues).

This sequence belongs to the DHHC palmitoyltransferase family. Interacts with IRF3 and STING1; in presence of DNA viruses recruits IRF3 to STING1 promoting IRF3 phosphorylation and activation.

The protein localises to the endosome membrane. The catalysed reaction is L-cysteinyl-[protein] + hexadecanoyl-CoA = S-hexadecanoyl-L-cysteinyl-[protein] + CoA. Functionally, endoplasmic reticulum-localized palmitoyltransferase that could catalyze the addition of palmitate onto various protein substrates and be involved in a variety of cellular processes. Has a palmitoyltransferase activity toward NCDN and regulates NCDN association with endosome membranes through this palmitoylation. May play a role in cell proliferation. Its function is as follows. Also has a palmitoyltransferase activity-independent function in DNA virus-triggered and CGAS-mediated innate immune response. Functions as an adapter that recruits IRF3 to STING1 to promote the activation of that key transcriptional regulator of type I interferon (IFN)-dependent immune response. The chain is Palmitoyltransferase ZDHHC11 from Mus musculus (Mouse).